The following is a 266-amino-acid chain: Protein-ADP-ribose hydrolase (266 aa).

The Macro domain occupies 74-265; that stretch reads TDLKDLKPIK…LYKEAFNRDA (192 aa). D93, I94, and N107 together coordinate ADP-D-ribose. C113, H118, and C120 together coordinate Zn(2+). The ADP-D-ribose site is built by C120, I121, D122, S212, T213, G214, and F216.

It belongs to the MacroD-type family. Zn-Macro subfamily. Zn(2+) serves as cofactor.

The catalysed reaction is 4-O-(ADP-D-ribosyl)-L-aspartyl-[protein] + H2O = L-aspartyl-[protein] + ADP-D-ribose + H(+). Functionally, ADP-ribosylhydrolase that specifically reverses the SirTM-mediated mono-ADP-ribosylation at an asparatate residue of GcvH-L, by releasing ADP-ribose from the target protein. May play a role in the regulation of the response to host-induced oxidative stress. This is Protein-ADP-ribose hydrolase from Staphylococcus aureus (strain MRSA252).